Consider the following 196-residue polypeptide: Putative 3-methyladenine DNA glycosylase (196 aa).

It belongs to the DNA glycosylase MPG family.

This Bacillus velezensis (strain DSM 23117 / BGSC 10A6 / LMG 26770 / FZB42) (Bacillus amyloliquefaciens subsp. plantarum) protein is Putative 3-methyladenine DNA glycosylase.